We begin with the raw amino-acid sequence, 528 residues long: Capsule biosynthesis protein CapD proenzyme (528 aa).

Residues 1 to 26 (MNSFKWGKKIILFCLIVSLMGGIGVS) form the signal peptide. Residue threonine 352 is the Nucleophile of the active site. Poly-gamma-D-glutamate is bound by residues threonine 352, 429–432 (GGNR), and arginine 520.

The protein belongs to the gamma-glutamyltransferase family. This enzyme consists of two polypeptide chains, which are synthesized in precursor form from a single polypeptide. In terms of processing, cleaved by autocatalysis into a large and a small subunit.

It functions in the pathway capsule biogenesis; capsule polysaccharide biosynthesis. In terms of biological role, transpeptidase that cleaves the poly-gamma-D-glutamate capsule and catalyzes the formation of an amide bond with the side-chain amino group of meso-diaminopimelic acid (m-DAP) in the peptidoglycan scaffold. Degradation of the high-molecular weight capsule (H-capsule) to the lower-molecular weight capsule (L-capsule), which is released from the bacterial cell surface. The production of L-capsule is essential to mediate escape from host defenses. The chain is Capsule biosynthesis protein CapD proenzyme (capD) from Bacillus anthracis.